The chain runs to 208 residues: Cysteine-rich protein 2 (208 aa).

Residues 5–57 enclose the LIM zinc-binding 1 domain; that stretch reads CPKCDKTVYFAEKVSSLGKDWHRFCLRCEHCSKTLTPGGHAEHDGKPFCHKPC. Residue K23 is modified to N6-acetyllysine. Positions 98 to 117 are disordered; the sequence is TEERKASGPPKGPSKASSVT. S104 carries the phosphoserine modification. Low complexity predominate over residues 104–115; the sequence is SGPPKGPSKASS. The 53-residue stretch at 126–178 folds into the LIM zinc-binding 2 domain; the sequence is CPRCNKRVYFAEKVTSLGKDWHRPCLRCERCGKTLTPGGHAEHDGQPYCHKPC. N6-acetyllysine occurs at positions 138 and 144.

Interacts with TGFB1I1.

In Bos taurus (Bovine), this protein is Cysteine-rich protein 2 (CRIP2).